The primary structure comprises 64 residues: Small ribosomal subunit protein eS17 (64 aa).

It belongs to the eukaryotic ribosomal protein eS17 family.

This chain is Small ribosomal subunit protein eS17, found in Halorubrum lacusprofundi (strain ATCC 49239 / DSM 5036 / JCM 8891 / ACAM 34).